Consider the following 416-residue polypeptide: Probable sarcosine oxidase (416 aa).

An FAD-binding site is contributed by 10-40 (DVIVVGAGVMGSSAAYQLAKRGQKTLLLEQF). At C325 the chain carries S-8alpha-FAD cysteine.

The protein belongs to the MSOX/MTOX family. FAD is required as a cofactor.

The catalysed reaction is sarcosine + O2 + H2O = formaldehyde + glycine + H2O2. In Arabidopsis thaliana (Mouse-ear cress), this protein is Probable sarcosine oxidase.